Here is a 194-residue protein sequence, read N- to C-terminus: Holliday junction branch migration complex subunit RuvA (194 aa).

Residues M1 to K62 form a domain I region. Residues T63–D136 are domain II. A flexible linker region spans residues D136–P140. The tract at residues L141 to S194 is domain III.

Belongs to the RuvA family. As to quaternary structure, homotetramer. Forms an RuvA(8)-RuvB(12)-Holliday junction (HJ) complex. HJ DNA is sandwiched between 2 RuvA tetramers; dsDNA enters through RuvA and exits via RuvB. An RuvB hexamer assembles on each DNA strand where it exits the tetramer. Each RuvB hexamer is contacted by two RuvA subunits (via domain III) on 2 adjacent RuvB subunits; this complex drives branch migration. In the full resolvosome a probable DNA-RuvA(4)-RuvB(12)-RuvC(2) complex forms which resolves the HJ.

Its subcellular location is the cytoplasm. Its function is as follows. The RuvA-RuvB-RuvC complex processes Holliday junction (HJ) DNA during genetic recombination and DNA repair, while the RuvA-RuvB complex plays an important role in the rescue of blocked DNA replication forks via replication fork reversal (RFR). RuvA specifically binds to HJ cruciform DNA, conferring on it an open structure. The RuvB hexamer acts as an ATP-dependent pump, pulling dsDNA into and through the RuvAB complex. HJ branch migration allows RuvC to scan DNA until it finds its consensus sequence, where it cleaves and resolves the cruciform DNA. The chain is Holliday junction branch migration complex subunit RuvA from Halothermothrix orenii (strain H 168 / OCM 544 / DSM 9562).